The primary structure comprises 452 residues: Bifunctional protein GlmU (452 aa).

The segment at 1–232 is pyrophosphorylase; sequence MTTNAPGAVI…EADMQGVNSR (232 aa). UDP-N-acetyl-alpha-D-glucosamine is bound by residues 11–14, lysine 25, glutamine 78, and 83–84; these read LAAG and GT. Residue aspartate 108 coordinates Mg(2+). The UDP-N-acetyl-alpha-D-glucosamine site is built by glycine 144, glutamate 158, and asparagine 230. Asparagine 230 contacts Mg(2+). Positions 233 to 253 are linker; it reads ADLAAAEATMQQRLRMAAMAG. Residues 254 to 452 form an N-acetyltransferase region; the sequence is GVTMLDPSSV…HKDKKKASGE (199 aa). Arginine 319 and lysine 337 together coordinate UDP-N-acetyl-alpha-D-glucosamine. The active-site Proton acceptor is the histidine 349. Positions 352 and 363 each coordinate UDP-N-acetyl-alpha-D-glucosamine. Acetyl-CoA contacts are provided by residues alanine 366, 372–373, serine 391, serine 409, and arginine 426; that span reads NY.

It in the N-terminal section; belongs to the N-acetylglucosamine-1-phosphate uridyltransferase family. The protein in the C-terminal section; belongs to the transferase hexapeptide repeat family. Homotrimer. It depends on Mg(2+) as a cofactor.

It is found in the cytoplasm. It catalyses the reaction alpha-D-glucosamine 1-phosphate + acetyl-CoA = N-acetyl-alpha-D-glucosamine 1-phosphate + CoA + H(+). It carries out the reaction N-acetyl-alpha-D-glucosamine 1-phosphate + UTP + H(+) = UDP-N-acetyl-alpha-D-glucosamine + diphosphate. It participates in nucleotide-sugar biosynthesis; UDP-N-acetyl-alpha-D-glucosamine biosynthesis; N-acetyl-alpha-D-glucosamine 1-phosphate from alpha-D-glucosamine 6-phosphate (route II): step 2/2. Its pathway is nucleotide-sugar biosynthesis; UDP-N-acetyl-alpha-D-glucosamine biosynthesis; UDP-N-acetyl-alpha-D-glucosamine from N-acetyl-alpha-D-glucosamine 1-phosphate: step 1/1. It functions in the pathway bacterial outer membrane biogenesis; LPS lipid A biosynthesis. Functionally, catalyzes the last two sequential reactions in the de novo biosynthetic pathway for UDP-N-acetylglucosamine (UDP-GlcNAc). The C-terminal domain catalyzes the transfer of acetyl group from acetyl coenzyme A to glucosamine-1-phosphate (GlcN-1-P) to produce N-acetylglucosamine-1-phosphate (GlcNAc-1-P), which is converted into UDP-GlcNAc by the transfer of uridine 5-monophosphate (from uridine 5-triphosphate), a reaction catalyzed by the N-terminal domain. The sequence is that of Bifunctional protein GlmU from Parvibaculum lavamentivorans (strain DS-1 / DSM 13023 / NCIMB 13966).